The primary structure comprises 150 residues: D-aminoacyl-tRNA deacylase (150 aa).

The Gly-cisPro motif, important for rejection of L-amino acids signature appears at 136–137; it reads GP.

This sequence belongs to the DTD family. As to quaternary structure, homodimer.

It is found in the cytoplasm. It catalyses the reaction glycyl-tRNA(Ala) + H2O = tRNA(Ala) + glycine + H(+). The catalysed reaction is a D-aminoacyl-tRNA + H2O = a tRNA + a D-alpha-amino acid + H(+). Functionally, an aminoacyl-tRNA editing enzyme that deacylates mischarged D-aminoacyl-tRNAs. Also deacylates mischarged glycyl-tRNA(Ala), protecting cells against glycine mischarging by AlaRS. Acts via tRNA-based rather than protein-based catalysis; rejects L-amino acids rather than detecting D-amino acids in the active site. By recycling D-aminoacyl-tRNA to D-amino acids and free tRNA molecules, this enzyme counteracts the toxicity associated with the formation of D-aminoacyl-tRNA entities in vivo and helps enforce protein L-homochirality. The protein is D-aminoacyl-tRNA deacylase of Staphylococcus aureus (strain bovine RF122 / ET3-1).